The primary structure comprises 76 residues: UPF0248 protein PAE2518 (76 aa).

Belongs to the UPF0248 family.

The sequence is that of UPF0248 protein PAE2518 from Pyrobaculum aerophilum (strain ATCC 51768 / DSM 7523 / JCM 9630 / CIP 104966 / NBRC 100827 / IM2).